The primary structure comprises 361 residues: Peptide chain release factor 1 (361 aa).

At Gln238 the chain carries N5-methylglutamine.

It belongs to the prokaryotic/mitochondrial release factor family. In terms of processing, methylated by PrmC. Methylation increases the termination efficiency of RF1.

The protein resides in the cytoplasm. In terms of biological role, peptide chain release factor 1 directs the termination of translation in response to the peptide chain termination codons UAG and UAA. In Mesomycoplasma hyopneumoniae (strain J / ATCC 25934 / NCTC 10110) (Mycoplasma hyopneumoniae), this protein is Peptide chain release factor 1.